We begin with the raw amino-acid sequence, 345 residues long: Esterase (345 aa).

An N-terminal signal peptide occupies residues 1–39 (MSSAMRKTTNSPVVRRLTAAAVALGSCLALAGPAGSAGA). Intrachain disulfides connect cysteine 73/cysteine 103, cysteine 156/cysteine 180, and cysteine 236/cysteine 294.

It localises to the secreted. The protein is Esterase (estA) of Streptomyces scabiei.